A 520-amino-acid chain; its full sequence is Type I restriction enzyme EcoprrI methylase subunit (520 aa).

S-adenosyl-L-methionine-binding positions include Glu-198 to Gln-203, Ser-230 to Ser-232, and Glu-254.

This sequence belongs to the N(4)/N(6)-methyltransferase family. As to quaternary structure, the type I restriction/modification system is composed of three polypeptides R, M and S; the restriction enzyme has stoichiometry R(2)M(2)S(1) while the methyltransferase is M(2)S(1).

It catalyses the reaction a 2'-deoxyadenosine in DNA + S-adenosyl-L-methionine = an N(6)-methyl-2'-deoxyadenosine in DNA + S-adenosyl-L-homocysteine + H(+). The subtype gamma methyltransferase (M) subunit of a type I restriction enzyme. The M and S subunits together form a methyltransferase (MTase) that methylates two adenine residues of the sequence 5'-CCAN(7)ATGC-3'. In the presence of the R subunit the complex can also act as an endonuclease, binding to the same target sequence but cutting the DNA some distance from this site. Whether the DNA is cut or modified depends on the methylation state of the target sequence. When the target site is unmodified, the DNA is cut. When the target site is hemimethylated, the complex acts as a maintenance MTase modifying the DNA so that both strands become methylated. After locating a non-methylated recognition site, the enzyme complex serves as a molecular motor that translocates DNA in an ATP-dependent manner until a collision occurs that triggers cleavage. The sequence is that of Type I restriction enzyme EcoprrI methylase subunit from Escherichia coli.